Here is a 474-residue protein sequence, read N- to C-terminus: Phenylalanine--tRNA ligase alpha subunit (474 aa).

L-phenylalanine is bound by residues Thr317, 356–358 (QLE), and Tyr396. Glu398 serves as a coordination point for Mg(2+). An L-phenylalanine-binding site is contributed by Phe421.

It belongs to the class-II aminoacyl-tRNA synthetase family. Phe-tRNA synthetase alpha subunit type 2 subfamily. Tetramer of two alpha and two beta subunits. Requires Mg(2+) as cofactor.

It is found in the cytoplasm. It carries out the reaction tRNA(Phe) + L-phenylalanine + ATP = L-phenylalanyl-tRNA(Phe) + AMP + diphosphate + H(+). This Archaeoglobus fulgidus (strain ATCC 49558 / DSM 4304 / JCM 9628 / NBRC 100126 / VC-16) protein is Phenylalanine--tRNA ligase alpha subunit.